The chain runs to 735 residues: Translation initiation factor IF-2, chloroplastic (735 aa).

The tr-type G domain occupies 239–411; that stretch reads RRAPIVTILG…ILLMADIENY (173 aa). A G1 region spans residues 248–255; that stretch reads GHVDHGKT. 248–255 is a GTP binding site; the sequence is GHVDHGKT. Residues 273–277 form a G2 region; that stretch reads GITQK. The interval 298–301 is G3; sequence DTPG. Residues 298-302 and 352-355 contribute to the GTP site; these read DTPGH and NKID. Positions 352–355 are G4; that stretch reads NKID. Residues 388 to 390 form a G5 region; that stretch reads SAS.

Belongs to the TRAFAC class translation factor GTPase superfamily. Classic translation factor GTPase family. IF-2 subfamily.

It localises to the plastid. The protein localises to the chloroplast. In terms of biological role, one of the essential components for the initiation of protein synthesis. Protects formylmethionyl-tRNA from spontaneous hydrolysis and promotes its binding to the 30S ribosomal subunits. Also involved in the hydrolysis of GTP during the formation of the 70S ribosomal complex. The chain is Translation initiation factor IF-2, chloroplastic (infB) from Guillardia theta (Cryptophyte).